A 73-amino-acid polypeptide reads, in one-letter code: Mu-sparatoxin-Hv2 (73 aa).

An N-terminal signal peptide occupies residues 1–20; that stretch reads MKFAIVITLLLVAFSAVALA. Positions 21–35 are excised as a propeptide; that stretch reads DKSIERAVMDLITAR. Disulfide bonds link Cys-39-Cys-53, Cys-46-Cys-58, and Cys-52-Cys-68. A Phenylalanine amide modification is found at Phe-72.

Belongs to the neurotoxin 10 (Hwtx-1) family. Expressed by the venom gland.

It localises to the secreted. Its function is as follows. Insecticidal toxin that potently and irreversibly blocks voltage-gated sodium channels (Nav) in cockroach dorsal unpaired median (DUM) neurons (IC(50)=833.7 nM). It does not change both the steady-state activation and inactivation curves, suggesting it acts as a pore blocker (possibly at Nav site 1). Does not show toxicity when intraperitoneally injected into mouse. This Heteropoda venatoria (Brown huntsman spider) protein is Mu-sparatoxin-Hv2.